A 139-amino-acid chain; its full sequence is UPF0310 protein RSal33209_2865 (139 aa).

Belongs to the UPF0310 family.

This Renibacterium salmoninarum (strain ATCC 33209 / DSM 20767 / JCM 11484 / NBRC 15589 / NCIMB 2235) protein is UPF0310 protein RSal33209_2865.